The primary structure comprises 1362 residues: DNA-directed RNA polymerase subunit beta (1362 aa).

This sequence belongs to the RNA polymerase beta chain family. As to quaternary structure, the RNAP catalytic core consists of 2 alpha, 1 beta, 1 beta' and 1 omega subunit. When a sigma factor is associated with the core the holoenzyme is formed, which can initiate transcription.

The catalysed reaction is RNA(n) + a ribonucleoside 5'-triphosphate = RNA(n+1) + diphosphate. In terms of biological role, DNA-dependent RNA polymerase catalyzes the transcription of DNA into RNA using the four ribonucleoside triphosphates as substrates. This is DNA-directed RNA polymerase subunit beta from Acidithiobacillus ferrooxidans (strain ATCC 23270 / DSM 14882 / CIP 104768 / NCIMB 8455) (Ferrobacillus ferrooxidans (strain ATCC 23270)).